A 588-amino-acid chain; its full sequence is Zeta-carotene desaturase, chloroplastic/chromoplastic (588 aa).

This sequence belongs to the zeta carotene desaturase family. The cofactor is NAD(+). NADP(+) serves as cofactor. Requires FAD as cofactor.

The protein localises to the plastid. It is found in the chloroplast. The protein resides in the chromoplast. It catalyses the reaction 9,9'-di-cis-zeta-carotene + 2 a quinone = 7,7',9,9'-tetra-cis-lycopene + 2 a quinol. Its pathway is carotenoid biosynthesis; lycopene biosynthesis. Its function is as follows. Catalyzes the conversion of zeta-carotene to lycopene via the intermediary of neurosporene. It carries out two consecutive desaturations (introduction of double bonds) at positions C-7 and C-7'. The protein is Zeta-carotene desaturase, chloroplastic/chromoplastic (ZDS) of Solanum lycopersicum (Tomato).